The primary structure comprises 180 residues: Zein-beta (180 aa).

A signal peptide spans 1-19; it reads MKMVIVLVVWLALSAASAS.

The protein resides in the vacuole. The protein localises to the aleurone grain. Zeins are major seed storage proteins. This Zea mays (Maize) protein is Zein-beta.